A 1905-amino-acid chain; its full sequence is Low-density lipoprotein receptor-related protein 4 (1905 aa).

An N-terminal signal peptide occupies residues 1–20 (MRRQWGALLLGALLCAHGLA). Residues 21 to 1725 (SSPECACGRS…AAPGEGLHIS (1705 aa)) are Extracellular-facing. LDL-receptor class A domains are found at residues 26 to 67 (ACGR…DGCI), 70 to 106 (TCSPLDFHCDNGKCIRRSWVCDGDNDCEDDSDEQDCP), 109 to 144 (ECEEDEFPCQNGYCIRSLWHCDGDNDCGDNSDEQCD), 147 to 183 (KCSDKEFRCSDGSCIAEHWYCDGDTDCKDGSDEENCP), 190 to 226 (PCNLEEFQCAYGRCILDIYHCDGDDDCGDWSDESDCS), 230 to 266 (PCRSGEFMCDSGLCINAGWRCDGDADCDDQSDERNCT), 269 to 305 (MCTAEQFRCHSGRCVRLSWRCDGEDDCADNSDEENCE), and 311 to 350 (QCALDQFLCWNGRCIGQRKLCNGVNDCGDNSDESPQQNCR). Disulfide bonds link Cys27–Cys44, Cys34–Cys57, Cys51–Cys66, Cys71–Cys83, Cys78–Cys96, Cys90–Cys105, Cys110–Cys122, Cys117–Cys135, Cys129–Cys143, Cys148–Cys160, Cys155–Cys173, Cys167–Cys182, Cys191–Cys203, Cys198–Cys216, Cys210–Cys225, Cys231–Cys243, Cys238–Cys256, Cys250–Cys265, Cys270–Cys282, Cys277–Cys295, Cys289–Cys304, Cys312–Cys324, Cys319–Cys337, Cys331–Cys349, Cys358–Cys369, Cys365–Cys378, Cys380–Cys393, Cys399–Cys409, Cys405–Cys418, and Cys420–Cys433. An N-linked (GlcNAc...) asparagine glycan is attached at Asn264. The EGF-like 1; calcium-binding domain occupies 354-394 (GEENCNVNNGGCAQKCQMVRGAVQCTCHTGYRLTEDGHTCQ). An EGF-like 2; calcium-binding domain is found at 395–434 (DVNECAEEGYCSQGCTNSEGAFQCWCETGYELRPDRRSCK). LDL-receptor class B repeat units follow at residues 480 to 522 (ELVF…DWVH), 523 to 565 (DKLY…HPME), 566 to 609 (GTIY…DYAG), 610 to 652 (RRMY…FEDS), and 653 to 693 (LYWT…LHPQ). The N-linked (GlcNAc...) asparagine glycan is linked to Asn498. Positions 698-737 (GKNRCGDNNGGCTHLCLPSGQNYTCACPTGFRKISSHACA) constitute an EGF-like 3 domain. Cystine bridges form between Cys702–Cys713, Cys709–Cys722, and Cys724–Cys736. Asn719 carries N-linked (GlcNAc...) asparagine glycosylation. 5 LDL-receptor class B repeats span residues 785–827 (DHVY…DWVT), 828–870 (NKLY…EPMG), 871–914 (GYMY…DYGS), 915–956 (QRLY…LYGE), and 957–998 (RIYW…FHRR). An N-linked (GlcNAc...) asparagine glycan is attached at Asn901. N-linked (GlcNAc...) asparagine glycosylation occurs at Asn1077. LDL-receptor class B repeat units lie at residues 1093-1135 (GKVY…DAIG), 1136-1178 (RKVY…YHEM), 1179-1222 (GFMY…DKAS), 1223-1263 (SQLL…LLDS), 1264-1306 (YIYW…DRAQ), 1397-1439 (GKVY…DWVA), 1440-1482 (RNLY…FPRK), 1483-1526 (GYLF…DYDT), 1527-1568 (RRIY…QDRW), and 1569-1610 (IYWT…SPQR). 2 N-linked (GlcNAc...) asparagine glycosylation sites follow: Asn1415 and Asn1467. A disordered region spans residues 1659-1686 (PRATGMSEKSPVLPNTPPTTLYSSTTRT). Positions 1676 to 1686 (PTTLYSSTTRT) are enriched in low complexity. Residues 1726–1746 (YAIGGLLSILLILVVIAALML) form a helical membrane-spanning segment. Over 1747–1905 (YRHKKSKFTD…ERKLSSESQV (159 aa)) the chain is Cytoplasmic. The Endocytosis signal motif lies at 1766-1769 (NPSY). The tract at residues 1852–1905 (ASSGSLDDTETEQLLQEEQSECSSVHTAATPERRGSLPDTGWKHERKLSSESQV) is disordered. Basic and acidic residues predominate over residues 1882 to 1905 (PERRGSLPDTGWKHERKLSSESQV).

This sequence belongs to the LDLR family. As to quaternary structure, homooligomer. Interacts with MUSK; the heterodimer forms an AGRIN receptor complex that binds AGRIN resulting in activation of MUSK. Interacts (via the extracellular domain) with SOST; the interaction facilitates the inhibition of Wnt signaling. Interacts with MESD; the interaction promotes glycosylation of LRP4 and its cell-surface expression. As to expression, expressed in bone; present in osteoblasts and osteocytes. No expression is observed in osteoclast. Expressed in several regions of the brain.

Its subcellular location is the cell membrane. Functionally, mediates SOST-dependent inhibition of bone formation. Functions as a specific facilitator of SOST-mediated inhibition of Wnt signaling. Plays a key role in the formation and the maintenance of the neuromuscular junction (NMJ), the synapse between motor neuron and skeletal muscle. Directly binds AGRIN and recruits it to the MUSK signaling complex. Mediates the AGRIN-induced phosphorylation of MUSK, the kinase of the complex. The activation of MUSK in myotubes induces the formation of NMJ by regulating different processes including the transcription of specific genes and the clustering of AChR in the postsynaptic membrane. Alternatively, may be involved in the negative regulation of the canonical Wnt signaling pathway, being able to antagonize the LRP6-mediated activation of this pathway. More generally, has been proposed to function as a cell surface endocytic receptor binding and internalizing extracellular ligands for degradation by lysosomes. May play an essential role in the process of digit differentiation. The protein is Low-density lipoprotein receptor-related protein 4 (LRP4) of Homo sapiens (Human).